Consider the following 492-residue polypeptide: Catalase isozyme 3 (492 aa).

Active-site residues include histidine 65 and asparagine 138. Tyrosine 347 contacts heme.

It belongs to the catalase family. In terms of assembly, homotetramer. Heme is required as a cofactor. Abundant in green cotyledons, etiolated cotyledons, green hypocotyl and root, but not in young leaf.

It localises to the peroxisome. It carries out the reaction 2 H2O2 = O2 + 2 H2O. Its function is as follows. Occurs in almost all aerobically respiring organisms and serves to protect cells from the toxic effects of hydrogen peroxide. In Cucurbita pepo (Vegetable marrow), this protein is Catalase isozyme 3 (CAT3).